A 540-amino-acid polypeptide reads, in one-letter code: Transcription initiation factor IIF subunit alpha (540 aa).

Positions 1–26 (MDSQETKVFENVKQENPDEKKPKVEE) are enriched in basic and acidic residues. 2 disordered regions span residues 1 to 39 (MDSQ…QSQQ) and 70 to 106 (IDPS…SSSN). Composition is skewed to polar residues over residues 29-39 (SQNNASTQSQQ) and 89-106 (APSS…SSSN). Ser-259 and Ser-261 each carry phosphoserine. The stretch at 280–382 (MEGNEEDNKK…REEKLKSRFS (103 aa)) forms a coiled coil. Positions 341–416 (YESDEEDEDP…SSQLQSPNTS (76 aa)) are disordered. Positions 359 to 369 (SEEEVLQEEEE) are enriched in acidic residues. Residues 381-416 (FSANASKTNTPRPLERTPSSVSPVKASSQLQSPNTS) show a composition bias toward polar residues. Residue Ser-399 is modified to Phosphoserine.

It belongs to the TFIIF alpha subunit family. Component of the fcp1/TFIIF/polII complex via interaction of tfg3 with both tfg1/TFIIF-alpha and tfg2/TFIIF-beta subunits.

The protein resides in the nucleus. Its function is as follows. TFIIF is a general transcription initiation factor that binds to RNA polymerase II and helps to recruit it to the initiation complex in collaboration with TFIIB. It promotes transcription elongation. In Schizosaccharomyces pombe (strain 972 / ATCC 24843) (Fission yeast), this protein is Transcription initiation factor IIF subunit alpha (tfg1).